Reading from the N-terminus, the 289-residue chain is 3-methyl-2-oxobutanoate hydroxymethyltransferase (289 aa).

Polar residues predominate over residues 1–15 (MSTTFQLDTSTSRAN). The tract at residues 1-20 (MSTTFQLDTSTSRANPTPAP) is disordered. Positions 67 and 106 each coordinate Mg(2+). 3-methyl-2-oxobutanoate is bound by residues 67 to 68 (DS), aspartate 106, and lysine 136. Residue glutamate 138 coordinates Mg(2+). Residue glutamate 205 is the Proton acceptor of the active site.

This sequence belongs to the PanB family. As to quaternary structure, homodecamer; pentamer of dimers. Mg(2+) serves as cofactor.

It is found in the cytoplasm. It catalyses the reaction 3-methyl-2-oxobutanoate + (6R)-5,10-methylene-5,6,7,8-tetrahydrofolate + H2O = 2-dehydropantoate + (6S)-5,6,7,8-tetrahydrofolate. It participates in cofactor biosynthesis; (R)-pantothenate biosynthesis; (R)-pantoate from 3-methyl-2-oxobutanoate: step 1/2. Catalyzes the reversible reaction in which hydroxymethyl group from 5,10-methylenetetrahydrofolate is transferred onto alpha-ketoisovalerate to form ketopantoate. This Novosphingobium aromaticivorans (strain ATCC 700278 / DSM 12444 / CCUG 56034 / CIP 105152 / NBRC 16084 / F199) protein is 3-methyl-2-oxobutanoate hydroxymethyltransferase.